Here is a 137-residue protein sequence, read N- to C-terminus: Small ribosomal subunit protein uS12 (137 aa).

D102 bears the 3-methylthioaspartic acid mark.

It belongs to the universal ribosomal protein uS12 family. In terms of assembly, part of the 30S ribosomal subunit. Contacts proteins S8 and S17. May interact with IF1 in the 30S initiation complex.

With S4 and S5 plays an important role in translational accuracy. In terms of biological role, interacts with and stabilizes bases of the 16S rRNA that are involved in tRNA selection in the A site and with the mRNA backbone. Located at the interface of the 30S and 50S subunits, it traverses the body of the 30S subunit contacting proteins on the other side and probably holding the rRNA structure together. The combined cluster of proteins S8, S12 and S17 appears to hold together the shoulder and platform of the 30S subunit. In Phytoplasma mali (strain AT), this protein is Small ribosomal subunit protein uS12.